Reading from the N-terminus, the 971-residue chain is Exportin-2 (971 aa).

An N-acetylmethionine modification is found at methionine 1. The 74-residue stretch at 29–102 folds into the Importin N-terminal domain; sequence AEKFLESVEG…KANIVHLMLS (74 aa). Serine 112 is subject to Phosphoserine. An N6-acetyllysine mark is found at lysine 574 and lysine 824. Serine 931 is modified (phosphoserine).

This sequence belongs to the XPO2/CSE1 family. In terms of assembly, found in a complex with CSE1L/XPO2, Ran and KPNA2. Binds with high affinity to importin-alpha only in the presence of RanGTP. The complex is dissociated by the combined action of RanBP1 and RanGAP1. Interacts with CFTR. As to expression, ubiquitous. Detected in embryos from 5 to 17 dpc. Highly expressed in adult testis, heart, brain, lung, liver, skeletal muscle, spleen and kidney.

It is found in the cytoplasm. It localises to the nucleus. Export receptor for importin-alpha. Mediates importin-alpha re-export from the nucleus to the cytoplasm after import substrates (cargos) have been released into the nucleoplasm. In the nucleus binds cooperatively to importin-alpha and to the GTPase Ran in its active GTP-bound form. Docking of this trimeric complex to the nuclear pore complex (NPC) is mediated through binding to nucleoporins. Upon transit of a nuclear export complex into the cytoplasm, disassembling of the complex and hydrolysis of Ran-GTP to Ran-GDP (induced by RANBP1 and RANGAP1, respectively) cause release of the importin-alpha from the export receptor. CSE1L/XPO2 then return to the nuclear compartment and mediate another round of transport. The directionality of nuclear export is thought to be conferred by an asymmetric distribution of the GTP- and GDP-bound forms of Ran between the cytoplasm and nucleus. This is Exportin-2 (Cse1l) from Mus musculus (Mouse).